Consider the following 122-residue polypeptide: Small ribosomal subunit protein uS13 (122 aa).

Residues 98–122 (VRGQRTHTNARTRKGPAKAIAGKKK) are disordered.

The protein belongs to the universal ribosomal protein uS13 family. As to quaternary structure, part of the 30S ribosomal subunit. Forms a loose heterodimer with protein S19. Forms two bridges to the 50S subunit in the 70S ribosome.

Its function is as follows. Located at the top of the head of the 30S subunit, it contacts several helices of the 16S rRNA. In the 70S ribosome it contacts the 23S rRNA (bridge B1a) and protein L5 of the 50S subunit (bridge B1b), connecting the 2 subunits; these bridges are implicated in subunit movement. Contacts the tRNAs in the A and P-sites. In Jannaschia sp. (strain CCS1), this protein is Small ribosomal subunit protein uS13.